The following is an 85-amino-acid chain: U4-theraphotoxin-Hhn1s (85 aa).

Positions 1–22 (MKVTLIAILTCAAVLVLHTTAA) are cleaved as a signal peptide. A propeptide spanning residues 23–48 (EELEAESQLMEVGMPDTELAAVDEER) is cleaved from the precursor. 3 cysteine pairs are disulfide-bonded: cysteine 52–cysteine 66, cysteine 56–cysteine 77, and cysteine 71–cysteine 82.

The protein belongs to the neurotoxin 12 (Hwtx-2) family. 02 (Hwtx-2) subfamily. In terms of tissue distribution, expressed by the venom gland.

Its subcellular location is the secreted. Functionally, postsynaptic neurotoxin. The polypeptide is U4-theraphotoxin-Hhn1s (Cyriopagopus hainanus (Chinese bird spider)).